The primary structure comprises 33 residues: Mu-theraphotoxin-Tp1a (33 aa).

Disulfide bonds link Cys-2/Cys-17, Cys-9/Cys-22, and Cys-16/Cys-29. Ile-33 carries the post-translational modification Isoleucine amide.

The protein belongs to the neurotoxin 10 (Hwtx-1) family. 55 (ProTx-III) subfamily. In terms of tissue distribution, expressed by the venom gland.

It localises to the secreted. In terms of biological role, inhibits voltage-gated sodium channels without significantly altering the voltage dependence of activation or inactivation. Preferentially inhibits human Nav1.7/SCN9A (IC(50)=2.1 nM) &gt; human Nav1.6/SCN8A &gt; human Nav1.2/SCN2A &gt; human Nav1.1/SCN1A &gt; human Nav1.3/SCN3A channels. Exhibits analgesic properties by reversing spontaneous pain induced in mice by intraplantar injection with OD1 (AC P84646), a scorpion toxin that potentiates human Nav1.7/SCN9A. In Thrixopelma pruriens (Peruvian green velvet tarantula), this protein is Mu-theraphotoxin-Tp1a.